Here is a 369-residue protein sequence, read N- to C-terminus: Histidinol-phosphate aminotransferase (369 aa).

Positions 1–39 (MSFGIDDLPVRDELRGKSPYGAPQLDVPVRLNTNENPYP) are disordered. Residue Lys-230 is modified to N6-(pyridoxal phosphate)lysine.

This sequence belongs to the class-II pyridoxal-phosphate-dependent aminotransferase family. Histidinol-phosphate aminotransferase subfamily. Homodimer. Pyridoxal 5'-phosphate serves as cofactor.

It catalyses the reaction L-histidinol phosphate + 2-oxoglutarate = 3-(imidazol-4-yl)-2-oxopropyl phosphate + L-glutamate. Its pathway is amino-acid biosynthesis; L-histidine biosynthesis; L-histidine from 5-phospho-alpha-D-ribose 1-diphosphate: step 7/9. The sequence is that of Histidinol-phosphate aminotransferase (hisC) from Streptomyces avermitilis (strain ATCC 31267 / DSM 46492 / JCM 5070 / NBRC 14893 / NCIMB 12804 / NRRL 8165 / MA-4680).